The sequence spans 1238 residues: uncharacterized protein (1238 aa).

Disordered regions lie at residues 22 to 83, 96 to 150, 169 to 250, 264 to 694, 739 to 915, 936 to 955, and 1057 to 1089; these read LQSA…QEHL, SSRQ…IASP, FEPD…HQML, QLNS…AAMV, TKAA…SVPE, THSA…APHE, and PKIS…QCSS. Over residues 35 to 49 the composition is skewed to low complexity; the sequence is QPPNQQPHQTQQQQQ. Residues 58 to 72 are compositionally biased toward polar residues; the sequence is PSIQNLTTNATPTST. Over residues 73 to 83 the composition is skewed to low complexity; it reads QLQQQQQQEHL. Polar residues predominate over residues 96–110; that stretch reads SSRQNQGAPSGNLSN. Positions 125-145 are enriched in low complexity; that stretch reads SVSGNTNHTGSNSSSNSGSNN. The span at 188–204 shows a compositional bias: polar residues; the sequence is SASSASKLPTHNVQQQH. Composition is skewed to low complexity over residues 272–287, 309–334, and 393–406; these read SYQH…QSHP, PLLT…SSQH, and SNEE…NSSN. Over residues 433–450 the composition is skewed to polar residues; sequence SKPQHPQQAANLNNSCSP. Residue S453 is modified to Phosphoserine. Over residues 463–472 the composition is skewed to polar residues; sequence PFSTQKQSQT. Basic and acidic residues predominate over residues 523 to 536; that stretch reads TEQHRMQQDDEPPK. 2 stretches are compositionally biased toward low complexity: residues 549 to 570 and 632 to 641; these read QSNS…SQSS and TTAAVAAPPA. A Phosphothreonine modification is found at T642. Residues 678–688 show a composition bias toward basic and acidic residues; the sequence is ERISSPEKPAE. Phosphoserine occurs at positions 682, 749, and 753. The span at 755–764 shows a compositional bias: polar residues; sequence IPQSRSTSTP. Residues S793 and S799 each carry the phosphoserine modification. Positions 832-860 are enriched in low complexity; it reads STSAAAAAALAARQLSEAASATKSKPAAG. Residues 861 to 874 are compositionally biased toward basic residues; that stretch reads AKKKNAGVKGKKGS. The span at 937 to 947 shows a compositional bias: basic and acidic residues; sequence HSAEDVNEKQT. The span at 1071-1089 shows a compositional bias: polar residues; sequence DSSISYSDDPNESRSQCSS. The C2HC pre-PHD-type; degenerate zinc-finger motif lies at 1089 to 1131; sequence SVDLLDCSTESKFVETFRGMGKTSENGFEVWLHEDCAVWSNDI. Position 1099 is a phosphoserine (S1099). The PHD-type zinc finger occupies 1151-1199; sequence YQCVLCQQTGASICCFQRCCKAAAHVPCGRSANWSLSEEDRKVYCHLHR.

This is an uncharacterized protein from Drosophila melanogaster (Fruit fly).